A 237-amino-acid polypeptide reads, in one-letter code: Octopine transport system permease protein OccQ (237 aa).

The region spanning 22-222 (TAMTMAVAFS…LITFVSGQVF (201 aa)) is the ABC transmembrane type-1 domain. Helical transmembrane passes span 26-46 (MAVA…GAAA), 72-92 (LVIY…ASLF), 96-116 (GFVG…VSGA), and 202-222 (SFYL…GQVF).

The protein belongs to the binding-protein-dependent transport system permease family. HisMQ subfamily.

It localises to the cell inner membrane. Functionally, component of the octopine active transport system probably consisting of four subunits: Q, M, P and T. This chain is Octopine transport system permease protein OccQ (occQ), found in Agrobacterium tumefaciens (strain Ach5).